Here is a 527-residue protein sequence, read N- to C-terminus: Protein IQ-DOMAIN 4 (527 aa).

Positions 13-90 (CLSPGKDKKN…PPSPPPPPPA (78 aa)) are disordered. Positions 17 to 26 (GKDKKNQKPE) are enriched in basic and acidic residues. The span at 63 to 90 (PYPPPPPLPDFAPQPLLPPPSPPPPPPA) shows a compositional bias: pro residues. Residues 147-175 (EETAAIKIQNAYRCYTARRTLRALRGMAR) form the IQ domain. The interval 256 to 273 (RSVNRKEASVRRERALAY) is calmodulin-binding. The disordered stretch occupies residues 323-527 (VSVKSSLKRE…EKKRRNGGSS (205 aa)). Residues 335-360 (IKSSPARSKTQKSASQSSIQWPVNND) are compositionally biased toward polar residues. Over residues 361–370 (TKSRKIEVTN) the composition is skewed to basic and acidic residues. Composition is skewed to polar residues over residues 399–422 (LDNT…NAQT) and 437–455 (NTKT…NLAN). The span at 471–481 (PKKEVVADKKK) shows a compositional bias: basic and acidic residues. Positions 478 to 485 (DKKKPPQM) match the Nuclear localization signal motif.

This sequence belongs to the IQD family. As to quaternary structure, binds to multiple calmodulin (CaM) in the presence of Ca(2+) and CaM-like proteins.

The protein localises to the nucleus. It localises to the nucleolus. Functionally, may be involved in cooperative interactions with calmodulins or calmodulin-like proteins. Recruits calmodulin proteins to microtubules, thus being a potential scaffold in cellular signaling and trafficking. May associate with nucleic acids and regulate gene expression at the transcriptional or post-transcriptional level. The polypeptide is Protein IQ-DOMAIN 4 (Arabidopsis thaliana (Mouse-ear cress)).